We begin with the raw amino-acid sequence, 887 residues long: Bifunctional uridylyltransferase/uridylyl-removing enzyme (887 aa).

Residues 1 to 329 (MKGLNAKPFS…FPDEEAVTTI (329 aa)) form a uridylyltransferase region. Residues 330-686 (INERFQKRGD…TRAAETGAGV (357 aa)) form a uridylyl-removing region. An HD domain is found at 448 to 570 (VDEHILMVVR…MRDERHLIAL (123 aa)). ACT domains are found at residues 687–772 (EVLV…GRLS) and 796–871 (VLSI…PETP). The tract at residues 864-887 (TSPQPETPGKAPGKPSAGDRIIPR) is disordered.

It belongs to the GlnD family. Mg(2+) serves as cofactor.

The enzyme catalyses [protein-PII]-L-tyrosine + UTP = [protein-PII]-uridylyl-L-tyrosine + diphosphate. It catalyses the reaction [protein-PII]-uridylyl-L-tyrosine + H2O = [protein-PII]-L-tyrosine + UMP + H(+). Uridylyltransferase (UTase) activity is inhibited by glutamine, while glutamine activates uridylyl-removing (UR) activity. Its function is as follows. Modifies, by uridylylation and deuridylylation, the PII regulatory proteins (GlnB and homologs), in response to the nitrogen status of the cell that GlnD senses through the glutamine level. Under low glutamine levels, catalyzes the conversion of the PII proteins and UTP to PII-UMP and PPi, while under higher glutamine levels, GlnD hydrolyzes PII-UMP to PII and UMP (deuridylylation). Thus, controls uridylylation state and activity of the PII proteins, and plays an important role in the regulation of nitrogen assimilation and metabolism. The sequence is that of Bifunctional uridylyltransferase/uridylyl-removing enzyme from Nitrosospira multiformis (strain ATCC 25196 / NCIMB 11849 / C 71).